The primary structure comprises 431 residues: 3'3'-cGAMP-specific phosphodiesterase 1 (431 aa).

One can recognise an HD domain in the interval 39 to 155 (DINHGHRVGY…IFLADRVDYL (117 aa)). Positions 231–427 (GVEEIMSIAM…YYQLSIAESP (197 aa)) constitute an HD-GYP domain. Positions 288 and 289 each coordinate a divalent metal cation. Catalysis depends on K292, which acts as the Proton donor. A divalent metal cation-binding residues include H317, H341, H342, and D370.

Monomer. Ca(2+) is required as a cofactor. It depends on Mg(2+) as a cofactor.

The catalysed reaction is 3',3'-cGAMP + H2O = 5'-pApG-3' + H(+). It catalyses the reaction 5'-pApG-3' + H2O = 5'-ApG-3' + phosphate. In terms of biological role, phosphodiesterase (PDE) that catalyzes the hydrolysis of 3'3'-cyclic GMP-AMP (3'3'-cGAMP), leading to linear 5'-pApG. Also displays 5'-nucleotidase activity, further hydrolyzing 5'-pApG to 5'-ApG. Counteracts the function of the 3'3'-cGAMP synthase DncV, and is involved in the modulation of intracellular 3'3'-cGAMP levels. Enhances bacterial chemotaxis and inhibits intestinal colonization in vivo. Thus exerts a crucial role in regulating bacterial infectivity through catalyzing 3'3'-cGAMP degradation. Is specific for 3'3'-cGAMP since it cannot degrade other cGAMP linkage isomers (3'2'-, 2'3'-, and 2'2'-cGAMPs). Is also able to hydrolyze c-di-GMP but not c-di-AMP. In Vibrio cholerae serotype O1 (strain ATCC 39315 / El Tor Inaba N16961), this protein is 3'3'-cGAMP-specific phosphodiesterase 1.